We begin with the raw amino-acid sequence, 180 residues long: Large ribosomal subunit protein uL5 (180 aa).

It belongs to the universal ribosomal protein uL5 family. As to quaternary structure, part of the 50S ribosomal subunit; part of the 5S rRNA/L5/L18/L25 subcomplex. Contacts the 5S rRNA and the P site tRNA. Forms a bridge to the 30S subunit in the 70S ribosome.

Functionally, this is one of the proteins that bind and probably mediate the attachment of the 5S RNA into the large ribosomal subunit, where it forms part of the central protuberance. In the 70S ribosome it contacts protein S13 of the 30S subunit (bridge B1b), connecting the 2 subunits; this bridge is implicated in subunit movement. Contacts the P site tRNA; the 5S rRNA and some of its associated proteins might help stabilize positioning of ribosome-bound tRNAs. This is Large ribosomal subunit protein uL5 from Chlamydia trachomatis serovar L2 (strain ATCC VR-902B / DSM 19102 / 434/Bu).